The chain runs to 380 residues: 3-isopropylmalate dehydratase large subunit 2 (380 aa).

3 residues coordinate [4Fe-4S] cluster: C262, C320, and C323.

This sequence belongs to the aconitase/IPM isomerase family. LeuC type 2 subfamily. Heterodimer of LeuC and LeuD. [4Fe-4S] cluster is required as a cofactor.

The catalysed reaction is (2R,3S)-3-isopropylmalate = (2S)-2-isopropylmalate. It participates in amino-acid biosynthesis; L-leucine biosynthesis; L-leucine from 3-methyl-2-oxobutanoate: step 2/4. Functionally, catalyzes the isomerization between 2-isopropylmalate and 3-isopropylmalate, via the formation of 2-isopropylmaleate. This Pyrococcus furiosus (strain ATCC 43587 / DSM 3638 / JCM 8422 / Vc1) protein is 3-isopropylmalate dehydratase large subunit 2.